Here is a 269-residue protein sequence, read N- to C-terminus: Expansin-A32 (269 aa).

An N-terminal signal peptide occupies residues 1–25 (MWCTWALGRVVLAVVFLVALAAGDA). The Expansin-like EG45 domain occupies 60–174 (DGACGYKDTS…RRVPCVKVGG (115 aa)). In terms of domain architecture, Expansin-like CBD spans 184-264 (YFNLVMVSNV…DWQFGVTYQA (81 aa)).

It belongs to the expansin family. Expansin A subfamily.

Its subcellular location is the secreted. It is found in the cell wall. The protein resides in the membrane. Functionally, may cause loosening and extension of plant cell walls by disrupting non-covalent bonding between cellulose microfibrils and matrix glucans. No enzymatic activity has been found. May be required for rapid internodal elongation in deepwater rice during submergence. This is Expansin-A32 (EXPA32) from Oryza sativa subsp. japonica (Rice).